The primary structure comprises 322 residues: Deoxycytidylate deaminase (322 aa).

A CMP/dCMP-type deaminase domain is found at 173 to 311 (SWDSYFMEMA…SLLQAAGVQL (139 aa)). Histidine 246 lines the Zn(2+) pocket. Catalysis depends on glutamate 248, which acts as the Proton donor. Residues cysteine 273 and cysteine 276 each coordinate Zn(2+).

This sequence belongs to the cytidine and deoxycytidylate deaminase family. Requires Zn(2+) as cofactor.

It is found in the cytoplasm. The protein localises to the nucleus. It catalyses the reaction dCMP + H2O + H(+) = dUMP + NH4(+). In terms of biological role, supplies the nucleotide substrate for thymidylate synthetase. This chain is Deoxycytidylate deaminase, found in Schizosaccharomyces pombe (strain 972 / ATCC 24843) (Fission yeast).